The sequence spans 53 residues: Conotoxin Cal6.27 (53 aa).

Residues 1–24 (MKLTCVLIAAMLLLAVCQLDSADA) form the signal peptide. 3 disulfide bridges follow: C29–C43, C36–C47, and C42–C51.

The protein belongs to the conotoxin O1 superfamily. As to expression, expressed by the venom duct.

The protein resides in the secreted. Probable neurotoxin. The sequence is that of Conotoxin Cal6.27 from Californiconus californicus (California cone).